The following is a 270-amino-acid chain: NAD kinase (270 aa).

D49 acts as the Proton acceptor in catalysis. NAD(+) is bound by residues 49-50 (DG), R54, 126-127 (NE), R152, D154, 165-170 (TAYNKS), A189, and Q227.

The protein belongs to the NAD kinase family. A divalent metal cation serves as cofactor.

It localises to the cytoplasm. It carries out the reaction NAD(+) + ATP = ADP + NADP(+) + H(+). Its function is as follows. Involved in the regulation of the intracellular balance of NAD and NADP, and is a key enzyme in the biosynthesis of NADP. Catalyzes specifically the phosphorylation on 2'-hydroxyl of the adenosine moiety of NAD to yield NADP. The sequence is that of NAD kinase from Lactococcus lactis subsp. cremoris (strain SK11).